A 1288-amino-acid polypeptide reads, in one-letter code: Probable serine/threonine-protein kinase drkD (1288 aa).

Residues 1 to 12 (MEGSFQFNKSKQ) show a composition bias toward polar residues. 3 disordered regions span residues 1 to 132 (MEGS…QYHP), 156 to 223 (FNVS…PEEI), and 269 to 386 (SFGH…DDEE). Composition is skewed to low complexity over residues 13 to 79 (TNNN…NSTS) and 156 to 220 (FNVS…QQQP). Positions 221 to 248 (EEIEGELNRERQERDKMLHEEAEIEQYK) form a coiled coil. Residues 271 to 291 (GHITSANSDETTNNESGSPIN) show a composition bias toward polar residues. The span at 302 to 343 (PHSSHNEDHQSDQDNHGQFMNDEHQSTDDDQNKSDNEKESES) shows a compositional bias: basic and acidic residues. The span at 344 to 354 (ARNSGDLQQKV) shows a compositional bias: polar residues. Residues 376 to 386 (EGEEEDDDDEE) show a composition bias toward acidic residues. 7 LRR repeats span residues 400 to 421 (KSTKLSLSNCWLKVIPTDVWSI), 423 to 444 (ELRDLDLSANQLKKVSKSIGLL), 446 to 468 (HLKRLRLNHNQLTALPKELYSLP), 469 to 490 (RLTTLYLNNNNFKVVPKEINRL), 492 to 513 (SLKTLDLSFNQITDISPQTNLH), 517 to 538 (NLVELRLRYNQLSSLPQNMLES), and 540 to 561 (HLQVLWLEGNRLPLNKAILKKS). 3 disordered regions span residues 690 to 717 (WDQQQQQQQQQSPNVSTPPISTSPVLTG), 733 to 764 (PTQQINNPPSPVTQFNQASPQHNNNQQQQQQQ), and 796 to 825 (QQQQQQNGSPQQPHVNNNNNNNIQQNKDHQ). Polar residues-rich tracts occupy residues 701–717 (SPNVSTPPISTSPVLTG) and 733–757 (PTQQINNPPSPVTQFNQASPQHNNN). The 254-residue stretch at 851–1104 (IAIGARIGRG…EILPIMEGMI (254 aa)) folds into the Protein kinase domain. Residues 857-865 (IGRGGYGQV) and Lys-878 each bind ATP. The active-site Proton acceptor is the Asp-974. Disordered stretches follow at residues 1118-1141 (GRPIPYVGPPEKDPSNKQPPQNMA) and 1245-1288 (QQQL…NDKK). Low complexity predominate over residues 1257–1268 (NRLNYNFNNSNN). A compositionally biased stretch (polar residues) spans 1269-1282 (SDIQPMQQENNYRM).

It belongs to the protein kinase superfamily. TKL Ser/Thr protein kinase family.

It carries out the reaction L-seryl-[protein] + ATP = O-phospho-L-seryl-[protein] + ADP + H(+). It catalyses the reaction L-threonyl-[protein] + ATP = O-phospho-L-threonyl-[protein] + ADP + H(+). This Dictyostelium discoideum (Social amoeba) protein is Probable serine/threonine-protein kinase drkD (drkD).